Consider the following 118-residue polypeptide: Diacylglycerol kinase (118 aa).

Glu-28 serves as a coordination point for a divalent metal cation. Helical transmembrane passes span 29-49 and 55-75; these read TAFRHECFLACILIPLTFFLG and IILMISSVLLVMALELLNSAV. The Proton acceptor role is filled by Glu-69. Glu-76 lines the a divalent metal cation pocket. Residues 98–118 form a helical membrane-spanning segment; sequence SASVFIALCIVGIVWGGILFF.

This sequence belongs to the bacterial diacylglycerol kinase family. Requires Mg(2+) as cofactor.

It is found in the cell inner membrane. The enzyme catalyses a 1,2-diacyl-sn-glycerol + ATP = a 1,2-diacyl-sn-glycero-3-phosphate + ADP + H(+). Catalyzes the ATP-dependent phosphorylation of sn-l,2-diacylglycerol (DAG) to phosphatidic acid. Involved in the recycling of diacylglycerol produced as a by-product during membrane-derived oligosaccharide (MDO) biosynthesis. The sequence is that of Diacylglycerol kinase (dgkA) from Haemophilus influenzae (strain ATCC 51907 / DSM 11121 / KW20 / Rd).